A 471-amino-acid polypeptide reads, in one-letter code: Thymidine phosphorylase (471 aa).

The segment covering Met1–Ser10 has biased composition (pro residues). The tract at residues Met1–Gln21 is disordered. The residue at position 6 (Thr6) is a Phosphothreonine. Substrate is bound by residues His102, Arg188, Ser203, and Lys207.

Belongs to the thymidine/pyrimidine-nucleoside phosphorylase family. Homodimer.

The catalysed reaction is thymidine + phosphate = 2-deoxy-alpha-D-ribose 1-phosphate + thymine. The protein operates within pyrimidine metabolism; dTMP biosynthesis via salvage pathway; dTMP from thymine: step 1/2. Functionally, catalyzes the reversible phosphorolysis of thymidine. The produced molecules are then utilized as carbon and energy sources or in the rescue of pyrimidine bases for nucleotide synthesis. The sequence is that of Thymidine phosphorylase (Tymp) from Mus musculus (Mouse).